Reading from the N-terminus, the 434-residue chain is Lecithin-cholesterol acyltransferase-like 1 (434 aa).

The Acyl-ester intermediate role is filled by Ser-191. Residues Asp-354 and His-386 each act as charge relay system in the active site.

This sequence belongs to the AB hydrolase superfamily. Lipase family.

This is Lecithin-cholesterol acyltransferase-like 1 from Oryza sativa subsp. japonica (Rice).